The chain runs to 1645 residues: Thrombospondin type-1 domain-containing protein 7A (1645 aa).

Positions 1–38 (MGLRAGRLASPSRGVLQLLRLPLLLLLLLSSGARGAAA) are cleaved as a signal peptide. Topologically, residues 39–1595 (QGDTEVPTLY…FGPDGRLKTW (1557 aa)) are extracellular. 3 TSP type-1 domains span residues 46-105 (TLYL…KVCD), 109-181 (ELYD…IPCQ), and 183-236 (DCIV…NPCE). N-linked (GlcNAc...) asparagine glycosylation occurs at N223. Residues 255–300 (PHTRQARQARRRGKNKEREKERGKAVKDPEARELIKKKRNRNRQNR) form a disordered region. Residues 256–304 (HTRQARQARRRGKNKEREKERGKAVKDPEARELIKKKRNRNRQNRQENR) adopt a coiled-coil conformation. The span at 258-269 (RQARQARRRGKN) shows a compositional bias: basic residues. Positions 270–288 (KEREKERGKAVKDPEAREL) are enriched in basic and acidic residues. Basic residues predominate over residues 289–298 (IKKKRNRNRQ). An N-linked (GlcNAc...) asparagine glycan is attached at N321. 16 consecutive TSP type-1 domains span residues 349 to 405 (ECQV…VSQG), 412 to 499 (ATYG…VPCP), 501 to 563 (ECEV…PSCY), 623 to 684 (DCVL…HPCT), 685 to 758 (VYHW…LPCR), 760 to 820 (DCVV…PTCH), 821 to 893 (SYRW…IPCQ), 895 to 948 (DCQF…CPCD), 949 to 1022 (KYNA…IPCP), 1024 to 1084 (DCKL…SDCN), 1085 to 1152 (QYIW…LPCP), 1154 to 1208 (DCVI…KNCY), 1209 to 1272 (HYDY…VECP), 1274 to 1329 (NCQL…KPCY), 1330 to 1400 (RWQY…QPCP), and 1402 to 1463 (DCYL…GQCY). Intrachain disulfides connect C424/C494, C444/C498, and C455/C483. Residue N439 is glycosylated (N-linked (GlcNAc...) asparagine). N489 carries an N-linked (GlcNAc...) asparagine glycan. 2 disulfides stabilise this stretch: C624-C666 and C635-C639. N668 carries N-linked (GlcNAc...) asparagine glycosylation. 7 disulfides stabilise this stretch: C678/C683, C696/C753, C717/C757, C728/C741, C761/C803, C772/C776, and C813/C819. N-linked (GlcNAc...) asparagine glycosylation occurs at N706. N-linked (GlcNAc...) asparagine glycosylation is present at N957. Cystine bridges form between C961–C1017, C983–C1021, C994–C1007, C1025–C1062, C1036–C1040, and C1079–C1083. N1032 is a glycosylation site (N-linked (GlcNAc...) asparagine). Cysteines 1201 and 1207 form a disulfide. N-linked (GlcNAc...) asparagine glycosylation occurs at N1213. 12 cysteine pairs are disulfide-bonded: C1220-C1267, C1228-C1271, C1239-C1252, C1275-C1313, C1286-C1290, C1323-C1328, C1339-C1395, C1346-C1399, C1357-C1376, C1403-C1447, C1414-C1418, and C1457-C1462. N1264 is a glycosylation site (N-linked (GlcNAc...) asparagine). N1354 carries an N-linked (GlcNAc...) asparagine glycan. N1488 and N1535 each carry an N-linked (GlcNAc...) asparagine glycan. The chain crosses the membrane as a helical span at residues 1596 to 1616 (VYGVAAGAFVLLVFIVSMIYL). Topologically, residues 1617–1645 (ACKKPKKPQRRQNNRLKPLTLAYDGDADM) are cytoplasmic.

Proteolytic cleavage in the extracellular region generates a 210 kDa soluble form. In terms of processing, extensively N-glycosylated. As to expression, detected on kidney podocytes along the glomerular capillary wall (at protein level).

It is found in the cell membrane. The protein resides in the cell projection. Its subcellular location is the secreted. In terms of biological role, plays a role in actin cytoskeleton rearrangement. Its function is as follows. The soluble form promotes endothelial cell migration and filopodia formation during sprouting angiogenesis via a FAK-dependent mechanism. The polypeptide is Thrombospondin type-1 domain-containing protein 7A (Thsd7a) (Mus musculus (Mouse)).